A 240-amino-acid polypeptide reads, in one-letter code: Homeobox-leucine zipper protein HOX14 (240 aa).

The segment at 26-64 (SGEVQGERPRARRRRRRGARCVGGGGGGGEVDGGDPKKR) is disordered. Positions 35–44 (RARRRRRRGA) are enriched in basic residues. Over residues 46 to 56 (CVGGGGGGGEV) the composition is skewed to gly residues. Residues 59–118 (GDPKKRRLSDEQVEMLELSFREERKLETGRKVHLASELGLDPKQVAVWFQNRRARHKSKL) constitute a DNA-binding region (homeobox). Residues 108–167 (QNRRARHKSKLLEEEFSKLKHAHDAAILHKCHLENEVLRLKERLVVAEEEVRRLRSAAGS) are a coiled coil.

Belongs to the HD-ZIP homeobox family. Class I subfamily. In terms of tissue distribution, expressed in roots, stems, leaf blades and panicles.

Its subcellular location is the nucleus. Functionally, probable transcription factor. In Oryza sativa subsp. japonica (Rice), this protein is Homeobox-leucine zipper protein HOX14 (HOX14).